The following is a 62-amino-acid chain: MANAKDLKVTLVRSLNGRLKAHIACVRGLGVRRIHSPVVVKDTPENRGMINKVSYMLKVEEA.

The protein belongs to the universal ribosomal protein uL30 family. As to quaternary structure, part of the 50S ribosomal subunit.

The polypeptide is Large ribosomal subunit protein uL30 (Thioalkalivibrio sulfidiphilus (strain HL-EbGR7)).